Here is a 215-residue protein sequence, read N- to C-terminus: Cytokinin riboside 5'-monophosphate phosphoribohydrolase LOG4 (215 aa).

Substrate is bound by residues glutamate 84, 102-103 (RK), 119-125 (GYGTLEE), and threonine 131.

It belongs to the LOG family. Expressed in roots and shoots. Detected in root procambium, lateral root primordia, vascular tissues of cotyledons, leaves and stems, shoot apical meristem, axillary buds, young inflorescences, fruit abscission zones and basal part of ovules.

Its subcellular location is the cytoplasm. It is found in the nucleus. It carries out the reaction N(6)-(dimethylallyl)adenosine 5'-phosphate + H2O = N(6)-dimethylallyladenine + D-ribose 5-phosphate. The enzyme catalyses 9-ribosyl-trans-zeatin 5'-phosphate + H2O = trans-zeatin + D-ribose 5-phosphate. Cytokinin-activating enzyme working in the direct activation pathway. Phosphoribohydrolase that converts inactive cytokinin nucleotides to the biologically active free-base forms. The protein is Cytokinin riboside 5'-monophosphate phosphoribohydrolase LOG4 (LOG4) of Arabidopsis thaliana (Mouse-ear cress).